We begin with the raw amino-acid sequence, 457 residues long: Bifunctional protein GlmU (457 aa).

A pyrophosphorylase region spans residues 1-230 (MPLSLPLHIV…AQEVEGVNDL (230 aa)). UDP-N-acetyl-alpha-D-glucosamine-binding positions include 12–15 (LAAG), Lys-26, Gln-78, 83–84 (GT), 105–107 (YGD), Gly-140, Glu-155, Asn-170, and Asn-228. Mg(2+) is bound at residue Asp-107. Asn-228 contributes to the Mg(2+) binding site. The linker stretch occupies residues 231–251 (WQLTQLERAWQIRAARALCLQ). The N-acetyltransferase stretch occupies residues 252–457 (GARVADPARL…DGWQRPKKKT (206 aa)). UDP-N-acetyl-alpha-D-glucosamine contacts are provided by Arg-334 and Lys-352. His-364 functions as the Proton acceptor in the catalytic mechanism. The UDP-N-acetyl-alpha-D-glucosamine site is built by Tyr-367 and Asn-378. Residues Ala-381, 387–388 (NY), Ser-406, Ala-424, and Arg-441 each bind acetyl-CoA.

The protein in the N-terminal section; belongs to the N-acetylglucosamine-1-phosphate uridyltransferase family. This sequence in the C-terminal section; belongs to the transferase hexapeptide repeat family. As to quaternary structure, homotrimer. Mg(2+) is required as a cofactor.

It localises to the cytoplasm. The enzyme catalyses alpha-D-glucosamine 1-phosphate + acetyl-CoA = N-acetyl-alpha-D-glucosamine 1-phosphate + CoA + H(+). It catalyses the reaction N-acetyl-alpha-D-glucosamine 1-phosphate + UTP + H(+) = UDP-N-acetyl-alpha-D-glucosamine + diphosphate. Its pathway is nucleotide-sugar biosynthesis; UDP-N-acetyl-alpha-D-glucosamine biosynthesis; N-acetyl-alpha-D-glucosamine 1-phosphate from alpha-D-glucosamine 6-phosphate (route II): step 2/2. The protein operates within nucleotide-sugar biosynthesis; UDP-N-acetyl-alpha-D-glucosamine biosynthesis; UDP-N-acetyl-alpha-D-glucosamine from N-acetyl-alpha-D-glucosamine 1-phosphate: step 1/1. It functions in the pathway bacterial outer membrane biogenesis; LPS lipid A biosynthesis. Its function is as follows. Catalyzes the last two sequential reactions in the de novo biosynthetic pathway for UDP-N-acetylglucosamine (UDP-GlcNAc). The C-terminal domain catalyzes the transfer of acetyl group from acetyl coenzyme A to glucosamine-1-phosphate (GlcN-1-P) to produce N-acetylglucosamine-1-phosphate (GlcNAc-1-P), which is converted into UDP-GlcNAc by the transfer of uridine 5-monophosphate (from uridine 5-triphosphate), a reaction catalyzed by the N-terminal domain. The polypeptide is Bifunctional protein GlmU (Xylella fastidiosa (strain M23)).